We begin with the raw amino-acid sequence, 484 residues long: Tribbles (484 aa).

Residues 1–23 (MDNSSGQNSRTASSASTSKIVNY) are compositionally biased toward polar residues. The tract at residues 1 to 51 (MDNSSGQNSRTASSASTSKIVNYSSPVSPGVAAATSSSSSSSSSGMSSSQE) is disordered. Over residues 24 to 49 (SSPVSPGVAAATSSSSSSSSSGMSSS) the composition is skewed to low complexity. One can recognise a Protein kinase domain in the interval 129-397 (YRHLVDLTAS…ASHIFLTPWL (269 aa)). Acidic residues-rich tracts occupy residues 420-437 (AEEDEGTAADAMDDDEEG) and 475-484 (PEPDTDVDMG). Disordered regions lie at residues 420–443 (AEEDEGTAADAMDDDEEGLCPLGD) and 464–484 (MAQNANGLSTEPEPDTDVDMG).

Belongs to the protein kinase superfamily. CAMK Ser/Thr protein kinase family. Tribbles subfamily. Interacts with slbo. Interacts with Akt1. Expressed throughout the brain with highest levels of expression detected in the cell body rind and lower levels of expression detected in the neurophil (at protein level).

The protein localises to the nucleus. It is found in the cytoplasm. It localises to the cell cortex. Adapter protein that negatively regulates different signaling pathways to coordinate cell differentiation, proliferation, migration and growth. Functions by binding to key regulatory proteins and either blocks their activity or regulates their turnover by the proteasome. In various developing tissues functions as a cell cycle regulator that mediates cell proliferation according to the requirements of the developmental program. Acts by inducing the proteasomal degradation of the CD25 mitotic activators stg and twe at critical stages of development to delay entry into mitosis and thus mediate cell proliferation. During gastrulation, negatively regulates stg to delay mitosis in the ventral region of the embryonic mesoderm thus allowing invagination to be completed before cell division takes place. Delaying stg-dependent mitosis during bristle development and in migrating germline pole cells also arrests their cell divisions, whereas in cystocytes it promotes their cell divisions. Involved in the regulation of the mid-blastula transition; promotes the destruction of twe resulting in the cell cycle arrest in G2 of cycle 14 which delays mitosis and thus reduces cell proliferation allowing cell fate specification and morphogenesis to take place. In germline cells, blocks border cell migration during oogenesis by binding to slbo/C/EBP and promoting its ubiquitination and degradation by the proteasome. May function in a negative feedback loop with slbo to coordinate proper border cell migration. During tissue growth negatively regulates insulin signaling by binding to Akt1 and blocking its phosphorylation-dependent activation. However it may also function downstream in the insulin signaling pathway, acting with Akt1 to direct foxo degradation. Essential for the proper formation of operant place and aversive olfactory memories. In Drosophila melanogaster (Fruit fly), this protein is Tribbles.